We begin with the raw amino-acid sequence, 389 residues long: Flap endonuclease 1 (389 aa).

The segment at 1–110 (MGIKGLMKLL…GELAKRSDRR (110 aa)) is N-domain. D35 serves as a coordination point for Mg(2+). DNA contacts are provided by R48 and R76. D92 contacts Mg(2+). The disordered stretch occupies residues 103–124 (LAKRSDRRQEAQKALEEATEKG). Residues 128-259 (DIDRFNKRLV…KKAYAGIKEH (132 aa)) are I-domain. Positions 164, 166, 185, and 187 each coordinate Mg(2+). DNA is bound at residue E164. Residues G237 and D239 each coordinate DNA. D239 provides a ligand contact to Mg(2+). An interaction with PCNA region spans residues 350-358 (SQKRLDSFF). Positions 362–389 (PSANGAKKRKAPAAKGGKKAATAKKGKK) are disordered. Residues 367-389 (AKKRKAPAAKGGKKAATAKKGKK) are compositionally biased toward basic residues.

It belongs to the XPG/RAD2 endonuclease family. FEN1 subfamily. In terms of assembly, interacts with PCNA. Three molecules of FEN1 bind to one PCNA trimer with each molecule binding to one PCNA monomer. PCNA stimulates the nuclease activity without altering cleavage specificity. It depends on Mg(2+) as a cofactor. In terms of processing, phosphorylated. Phosphorylation upon DNA damage induces relocalization to the nuclear plasma.

It is found in the nucleus. The protein resides in the nucleolus. It localises to the nucleoplasm. Its subcellular location is the mitochondrion. In terms of biological role, structure-specific nuclease with 5'-flap endonuclease and 5'-3' exonuclease activities involved in DNA replication and repair. During DNA replication, cleaves the 5'-overhanging flap structure that is generated by displacement synthesis when DNA polymerase encounters the 5'-end of a downstream Okazaki fragment. It enters the flap from the 5'-end and then tracks to cleave the flap base, leaving a nick for ligation. Also involved in the long patch base excision repair (LP-BER) pathway, by cleaving within the apurinic/apyrimidinic (AP) site-terminated flap. Acts as a genome stabilization factor that prevents flaps from equilibrating into structures that lead to duplications and deletions. Also possesses 5'-3' exonuclease activity on nicked or gapped double-stranded DNA, and exhibits RNase H activity. Also involved in replication and repair of rDNA and in repairing mitochondrial DNA. This Phytophthora infestans (strain T30-4) (Potato late blight agent) protein is Flap endonuclease 1.